Here is a 263-residue protein sequence, read N- to C-terminus: 4-hydroxy-tetrahydrodipicolinate reductase (263 aa).

10–15 contacts NAD(+); the sequence is GASGKM. Arg38 provides a ligand contact to NADP(+). Residues 97–99 and 123–126 each bind NAD(+); these read GTT and APNF. His153 acts as the Proton donor/acceptor in catalysis. Position 154 (His154) interacts with (S)-2,3,4,5-tetrahydrodipicolinate. Lys157 (proton donor) is an active-site residue. 163–164 contributes to the (S)-2,3,4,5-tetrahydrodipicolinate binding site; sequence GT.

The protein belongs to the DapB family.

It is found in the cytoplasm. The enzyme catalyses (S)-2,3,4,5-tetrahydrodipicolinate + NAD(+) + H2O = (2S,4S)-4-hydroxy-2,3,4,5-tetrahydrodipicolinate + NADH + H(+). It catalyses the reaction (S)-2,3,4,5-tetrahydrodipicolinate + NADP(+) + H2O = (2S,4S)-4-hydroxy-2,3,4,5-tetrahydrodipicolinate + NADPH + H(+). Its pathway is amino-acid biosynthesis; L-lysine biosynthesis via DAP pathway; (S)-tetrahydrodipicolinate from L-aspartate: step 4/4. Its function is as follows. Catalyzes the conversion of 4-hydroxy-tetrahydrodipicolinate (HTPA) to tetrahydrodipicolinate. The chain is 4-hydroxy-tetrahydrodipicolinate reductase from Dehalococcoides mccartyi (strain ATCC BAA-2266 / KCTC 15142 / 195) (Dehalococcoides ethenogenes (strain 195)).